A 419-amino-acid chain; its full sequence is Tyrosine--tRNA ligase (419 aa).

Tyr34 lines the L-tyrosine pocket. The 'HIGH' region signature appears at 39-48 (PTADSLHIGN). The L-tyrosine site is built by Tyr169 and Gln173. The 'KMSKS' region motif lies at 230–234 (KFGKT). Position 233 (Lys233) interacts with ATP. Residues 352–419 (VPLVELLVSA…KKKYYLIRYA (68 aa)) form the S4 RNA-binding domain.

It belongs to the class-I aminoacyl-tRNA synthetase family. TyrS type 1 subfamily. As to quaternary structure, homodimer.

The protein resides in the cytoplasm. The catalysed reaction is tRNA(Tyr) + L-tyrosine + ATP = L-tyrosyl-tRNA(Tyr) + AMP + diphosphate + H(+). Its function is as follows. Catalyzes the attachment of tyrosine to tRNA(Tyr) in a two-step reaction: tyrosine is first activated by ATP to form Tyr-AMP and then transferred to the acceptor end of tRNA(Tyr). In Geobacillus kaustophilus (strain HTA426), this protein is Tyrosine--tRNA ligase.